The following is a 233-amino-acid chain: tRNA (guanine-N(7)-)-methyltransferase (233 aa).

S-adenosyl-L-methionine-binding residues include Glu62, Glu87, Asp116, and Asp138. Asp138 is a catalytic residue. Residues Lys142, Asp174, and 212–215 (TRYE) each bind substrate.

The protein belongs to the class I-like SAM-binding methyltransferase superfamily. TrmB family.

The catalysed reaction is guanosine(46) in tRNA + S-adenosyl-L-methionine = N(7)-methylguanosine(46) in tRNA + S-adenosyl-L-homocysteine. The protein operates within tRNA modification; N(7)-methylguanine-tRNA biosynthesis. Its function is as follows. Catalyzes the formation of N(7)-methylguanine at position 46 (m7G46) in tRNA. The protein is tRNA (guanine-N(7)-)-methyltransferase of Bartonella quintana (strain Toulouse) (Rochalimaea quintana).